Consider the following 369-residue polypeptide: METVKELVQFMQPNQRLDLKAVALTHVLGLTGSSEGKSAILSLDEMLMAIFGLTFDANQTVAKDAVLSLINLTSEEEAAIKVFQLAKQLQPPFAIVEVAAKEITNEQSDLADPWSMVLSNLTRVESLVHEILDTLERDDHTLPRLAKAFAQLDYNKKKAKLHYLAPIFCNLTQVSRGRELCCHRKYELLEKLLPFASFEGSVVRRGGTIGILKNVCFDTVYHDVILNEQSSILVAILQPLCGPEEFSDEDNELLPIELQYLPESKTREEDPDLRKMLLECLLQLCSTRRSREILRSRGVYEILREYHKWEAKVGKDSDCLLACENVVDILIKKEEEIGLDNYKTEVEVPAEQSEKFVQEDAAYVKSLLD.

This sequence belongs to the HGH1 family.

The sequence is that of Protein HGH1 homolog from Drosophila melanogaster (Fruit fly).